We begin with the raw amino-acid sequence, 1143 residues long: Serine/threonine-protein kinase BRI1-like 2 (1143 aa).

The N-terminal stretch at 1–31 (MTTSPIRVRIRTRIQISFIFLLTHLSQSSSS) is a signal peptide. The Extracellular segment spans residues 32 to 756 (DQSSLKTDSL…GTRAASWANS (725 aa)). Residues 68–75 (CQFSGVTC) carry the Cys pair 1 motif. LRR repeat units lie at residues 77–101 (GGRVTEINLSGSGLSGIVSFNAFTS), 102–125 (LDSLSVLKLSENFFVLNSTSLLLL), 126–150 (PLTLTHLELSSSGLIGTLPENFFSK), 151–175 (YSNLISITLSYNNFTGKLPNDLFLS), 177–200 (KKLQTLDLSYNNITGPISGLTIPL), 203–227 (CVSMTYLDFSGNSISGYISDSLINC), 228–250 (TNLKSLNLSYNNFDGQIPKSFGE), 251–275 (LKLLQSLDLSHNRLTGWIPPEIGDT), 277–299 (RSLQNLRLSYNNFTGVIPESLSS), 300–324 (CSWLQSLDLSNNNISGPFPNTILRS), 326–349 (GSLQILLLSNNLISGDFPTSISAC), 351–373 (SLRIADFSSNRFSGVIPPDLCPG), 374–398 (AASLEELRLPDNLVTGEIPPAISQC), 399–422 (SELRTIDLSLNYLNGTIPPEIGNL), 424–446 (KLEQFIAWYNNIAGEIPPEIGKL), 447–470 (QNLKDLILNNNQLTGEIPPEFFNC), 472–493 (NIEWVSFTSNRLTGEVPKDFGI), 494–518 (LSRLAVLQLGNNNFTGEIPPELGKC), 520–542 (TLVWLDLNTNHLTGEIPPRLGRQ), 570–594 (VGGLVEFSGIRPERLLQIPSLKSCD), 610–634 (YQTIEYLDLSYNQLRGKIPDEIGEM), 635–660 (IALQVLELSHNQLSGEIPFTIGQLKN), 662–681 (GVFDASDNRLQGQIPESFSN), and 682–707 (LSFLVQIDLSNNELTGPIPQRGQLST). Asn-84 and Asn-118 each carry an N-linked (GlcNAc...) asparagine glycan. N-linked (GlcNAc...) asparagine glycosylation is found at Asn-163, Asn-188, Asn-226, and Asn-234. N-linked (GlcNAc...) asparagine glycans are attached at residues Asn-288 and Asn-312. Asn-412 carries N-linked (GlcNAc...) asparagine glycosylation. A glycan (N-linked (GlcNAc...) asparagine) is linked at Asn-469. Residue Asn-506 is glycosylated (N-linked (GlcNAc...) asparagine). Asn-681 is a glycosylation site (N-linked (GlcNAc...) asparagine). The Cys pair 2 motif lies at 720–727 (CGVPLPEC). Residues 757 to 777 (IVLGVLISAASVCILIVWAIA) traverse the membrane as a helical segment. Topologically, residues 778-1143 (VRARRRDADD…NNSHSHSNSL (366 aa)) are cytoplasmic. At Thr-835 the chain carries Phosphothreonine. One can recognise a Protein kinase domain in the interval 838-1129 (FSAASMIGHG…LQVVASLREL (292 aa)). Residues 844-852 (IGHGGFGEV) and Lys-866 contribute to the ATP site. The residue at position 911 (Tyr-911) is a Phosphotyrosine. Residue Asp-966 is the Proton acceptor of the active site. Ser-1001 carries the phosphoserine modification. Tyr-1009 carries the phosphotyrosine modification.

The protein belongs to the protein kinase superfamily. Ser/Thr protein kinase family. In terms of assembly, interacts with TTL3. In terms of tissue distribution, expressed in provascular and procambial sites throughout plant development. Expressed throughout globe- to heart-staged embryos. Then, it is restricted to procambial cells by the late torpedo stage, and this pattern persists throughout the duration of embryo development. After germination, it is expressed not only in procambial cells throughout the plant but also in all lateral organ primordia before the onset of vascularization.

It localises to the cell membrane. It carries out the reaction L-seryl-[protein] + ATP = O-phospho-L-seryl-[protein] + ADP + H(+). The enzyme catalyses L-threonyl-[protein] + ATP = O-phospho-L-threonyl-[protein] + ADP + H(+). Its function is as follows. Receptor with a serine/threonine-protein kinase activity, which may transduce extracellular spatial and temporal signals into downstream cell differentiation responses in provascular and procambial cells. In contrast to BRI1, BRL1 and BRL3, it does not bind brassinolide. This chain is Serine/threonine-protein kinase BRI1-like 2, found in Arabidopsis thaliana (Mouse-ear cress).